The chain runs to 443 residues: Phosphoglucosamine mutase (443 aa).

S101 serves as the catalytic Phosphoserine intermediate. Mg(2+) contacts are provided by S101, D239, D241, and D243. S101 bears the Phosphoserine mark.

The protein belongs to the phosphohexose mutase family. It depends on Mg(2+) as a cofactor. Post-translationally, activated by phosphorylation.

The enzyme catalyses alpha-D-glucosamine 1-phosphate = D-glucosamine 6-phosphate. Its function is as follows. Catalyzes the conversion of glucosamine-6-phosphate to glucosamine-1-phosphate. In Francisella tularensis subsp. novicida (strain U112), this protein is Phosphoglucosamine mutase.